The following is a 138-amino-acid chain: Cysteine desulfuration protein SufE (138 aa).

Catalysis depends on Cys-51, which acts as the Cysteine persulfide intermediate.

This sequence belongs to the SufE family. In terms of assembly, homodimer. Interacts with SufS.

The protein resides in the cytoplasm. It participates in cofactor biosynthesis; iron-sulfur cluster biosynthesis. In terms of biological role, participates in cysteine desulfuration mediated by SufS. Cysteine desulfuration mobilizes sulfur from L-cysteine to yield L-alanine and constitutes an essential step in sulfur metabolism for biosynthesis of a variety of sulfur-containing biomolecules. Functions as a sulfur acceptor for SufS, by mediating the direct transfer of the sulfur atom from the S-sulfanylcysteine of SufS, an intermediate product of cysteine desulfuration process. The chain is Cysteine desulfuration protein SufE from Shigella boydii serotype 18 (strain CDC 3083-94 / BS512).